A 243-amino-acid chain; its full sequence is MNTSQDTIYAQPNEHISDFQFDNRVAGVFSDMIRRSVPGYTQIINTIGDFADRFVMPNTQIYDLGCSLGAATLSIRRQIQGRQCRIIAVDNSESMVARCQENLNAYVSDTDVDLVCGDIRDIDIQNASLVVLNFTLQFLPPEDRETLIAKIYQGLNPGGILVLSEKIRFEDAPIQTLLEEQHLDFKRANGYSELEISQKRSALENVMKPDTLTTHQQRLTSQGFSHFSLWFQCFNFASMVAIK.

Residues Tyr-40, 65–67, 90–91, 118–119, Asn-133, and Arg-200 contribute to the S-adenosyl-L-methionine site; these read GCS, DN, and DI.

It belongs to the class I-like SAM-binding methyltransferase superfamily. Cx-SAM synthase family. Homodimer.

It catalyses the reaction prephenate + S-adenosyl-L-methionine = carboxy-S-adenosyl-L-methionine + 3-phenylpyruvate + H2O. Catalyzes the conversion of S-adenosyl-L-methionine (SAM) to carboxy-S-adenosyl-L-methionine (Cx-SAM). The sequence is that of Carboxy-S-adenosyl-L-methionine synthase from Shewanella putrefaciens (strain CN-32 / ATCC BAA-453).